Reading from the N-terminus, the 241-residue chain is MORN repeat-containing protein 3 (241 aa).

The interaction with MDM2 stretch occupies residues 6–35; it reads CPRKVEPPWKGWDRKAQKNGLRHQVFAVNG. MORN repeat units lie at residues 38-60, 62-84, 91-113, 114-136, 137-159, 160-182, and 184-205; these read YVGEWKGNLKHGKGTQVWKKSGA, YEGDWKFGKRDGYGSLSHPDPET, YSGWWKGDKKSGYGIQFFGPKEY, YEGEWCNNQRSGWGRMYYNNGDI, YEGQWQNDKPEGEGMLRLKNGNR, YEGIWERGMKNGHGRFFHLDHGQ, and FEGYWVDNVAKCGTMIDFGRDE. The segment at 76-100 is interaction with SIRT1; sequence SLSHPDPETGKLRRVYSGWWKGDKK. Positions 206–240 are interaction with TP53; that stretch reads APEPTQFPIPKVEILDPDGVLKEALDKLMKPEEEE.

In terms of assembly, interacts with MEIG1. Interacts with TP53, MDM2 and SIRT1; the interactions mediate post-transcriptional modifications of TP53 by MDM2 and SIRT1. In terms of tissue distribution, expressed in testis (at protein level).

Its subcellular location is the cytoplasmic vesicle. It localises to the secretory vesicle. The protein localises to the acrosome. Its function is as follows. Assembles a suppression complex (suppresome) by tethering SIRT1 and MDM2 to regulate composite modifications of p53/TP53. Confers both deacetylation-mediated functional inactivation, by SIRT1, and ubiquitination-dependent degradation, by MDM2, of p53/TP53, promoting a proliferative and cell survival behaviors. May play a role in the regulation of spermatogenesis. The polypeptide is MORN repeat-containing protein 3 (Morn3) (Mus musculus (Mouse)).